A 75-amino-acid chain; its full sequence is MPQISRYSDEQVEQLLAELLNVLEKHKAPTDLSLMVSGNMVTNLINTSIAPAQRQAIANSFARALQSSINEDKAH.

Belongs to the UPF0352 family.

This Shigella dysenteriae serotype 1 (strain Sd197) protein is UPF0352 protein YejL.